The chain runs to 430 residues: Immunoglobulin heavy constant delta (430 aa).

The Extracellular segment spans residues 1–406; it reads APTKAPDVFP…FDDVGSLWTT (406 aa). The Ig-like 1 domain occupies 6 to 98; that stretch reads PDVFPIISGC…TASKSKKEIF (93 aa). C28 and C84 are oxidised to a cystine. Residues 96–167 form a disordered region; that stretch reads EIFRWPESPK…TPECPSHTQP (72 aa). Polar residues predominate over residues 106–118; it reads AQASSVPTAQPQA. O-linked (GalNAc...) serine glycosylation is found at S109 and S110. T113, T126, T127, T131, and T132 each carry an O-linked (GalNAc...) threonine glycan. Basic and acidic residues predominate over residues 138–158; it reads GGEEKKKEKEKEEQEERETKT. Ig-like domains follow at residues 175–263 and 267–373; these read PAVQ…RLMA and PAAQ…RSLE. Cystine bridges form between C190–C249 and C294–C355. 3 N-linked (GlcNAc...) asparagine glycosylation sites follow: N225, N316, and N367. The chain crosses the membrane as a helical span at residues 407 to 427; the sequence is LSTFVALFILTLLYSGIVTFI. Over 428–430 the chain is Cytoplasmic; that stretch reads KVK.

As to quaternary structure, immunoglobulins are composed of two identical heavy chains and two identical light chains; disulfide-linked. An IgD molecule contains thus a delta heavy chain combined with either a kappa or a lambda light chains. Kappa light chains are found predominantly on the membrane IgD (mIgD) form and lambda on the secreted IgD (sIgD) form, this fact is poorly understood. Membrane-bound IgD molecules are non-covalently associated with a heterodimer of CD79A and CD79B.

Its subcellular location is the secreted. The protein localises to the cell membrane. Constant region of immunoglobulin heavy chains. Immunoglobulins, also known as antibodies, are membrane-bound or secreted glycoproteins produced by B lymphocytes. In the recognition phase of humoral immunity, the membrane-bound immunoglobulins serve as receptors which, upon binding of a specific antigen, trigger the clonal expansion and differentiation of B lymphocytes into immunoglobulins-secreting plasma cells. Secreted immunoglobulins mediate the effector phase of humoral immunity, which results in the elimination of bound antigens. The antigen binding site is formed by the variable domain of one heavy chain, together with that of its associated light chain. Thus, each immunoglobulin has two antigen binding sites with remarkable affinity for a particular antigen. The variable domains are assembled by a process called V-(D)-J rearrangement and can then be subjected to somatic hypermutations which, after exposure to antigen and selection, allow affinity maturation for a particular antigen. IgD is the major antigen receptor isotype on the surface of most peripheral B-cells, where it is coexpressed with IgM. The membrane-bound IgD (mIgD) induces the phosphorylation of CD79A and CD79B by the Src family of protein tyrosine kinases. Soluble IgD (sIgD) concentration in serum below those of IgG, IgA, and IgM but much higher than that of IgE. IgM and IgD molecules present on B cells have identical V regions and antigen-binding sites. After the antigen binds to the B-cell receptor, the secreted form sIgD is shut off. IgD is a potent inducer of TNF, IL1B, and IL1RN. IgD also induces release of IL6, IL10, and LIF from peripheral blood mononuclear cells. Monocytes seem to be the main producers of cytokines in vitro in the presence of IgD. The polypeptide is Immunoglobulin heavy constant delta (Homo sapiens (Human)).